We begin with the raw amino-acid sequence, 142 residues long: Hemoglobin subunit alpha (142 aa).

Residues Val2–Arg142 form the Globin domain. Ser4 is subject to Phosphoserine. Lys8 is subject to N6-succinyllysine. Thr9 is subject to Phosphothreonine. Lys12 is subject to N6-succinyllysine. Position 17 is an N6-acetyllysine; alternate (Lys17). Lys17 is modified (N6-succinyllysine; alternate). The residue at position 41 (Lys41) is an N6-succinyllysine. Ser50 bears the Phosphoserine mark. His59 is an O2 binding site. Heme b is bound at residue His88. Ser103 is modified (phosphoserine). At Thr109 the chain carries Phosphothreonine. Ser125 carries the phosphoserine modification. Phosphothreonine occurs at positions 135 and 138. Ser139 bears the Phosphoserine mark.

The protein belongs to the globin family. Heterotetramer of two alpha chains and two beta chains. As to expression, red blood cells.

Its function is as follows. Involved in oxygen transport from the lung to the various peripheral tissues. In terms of biological role, hemopressin acts as an antagonist peptide of the cannabinoid receptor CNR1. Hemopressin-binding efficiently blocks cannabinoid receptor CNR1 and subsequent signaling. The chain is Hemoglobin subunit alpha (HBA) from Equus zebra (Mountain zebra).